The sequence spans 77 residues: Liver-expressed antimicrobial peptide 2 (77 aa).

A signal peptide spans 1–22 (MWHLKLCAVLMIFLLLLGQIDG). The propeptide occupies 23–37 (SPIPEVSSAKRRPRR). 2 cysteine pairs are disulfide-bonded: Cys54–Cys65 and Cys60–Cys70.

This sequence belongs to the LEAP2 family.

Its subcellular location is the secreted. Its function is as follows. Has an antimicrobial activity. The protein is Liver-expressed antimicrobial peptide 2 (LEAP2) of Homo sapiens (Human).